The chain runs to 313 residues: MSTREIRIATRKSALALWQAEYVKARLEQAHTGLQVTLVPMVSRGDKLLDAPLAKIGGKGLFVKELETALLDNEADIAVHSMKDVPMDFPEGLGLYCICEREDPRDAFVSNTFDSLEALPAGSIVGTSSLRRQAQLLARRPDLQIRFLRGNVNTRLAKLDAGEYDAIILAAAGLIRLGFEDRITSTISVDDSLPAGGQGAVGIECRSADVEIHALLAPLHHVDTADRVIAERALNKRLNGGCQVPIACYAVLEGDQLWLRGLVGQPSGGTLLVADARAPRAAAEALGVQVAEDLLGQGAEAILKEVYGEAGHP.

At C242 the chain carries S-(dipyrrolylmethanemethyl)cysteine.

This sequence belongs to the HMBS family. Monomer. Requires dipyrromethane as cofactor.

It carries out the reaction 4 porphobilinogen + H2O = hydroxymethylbilane + 4 NH4(+). The protein operates within porphyrin-containing compound metabolism; protoporphyrin-IX biosynthesis; coproporphyrinogen-III from 5-aminolevulinate: step 2/4. Functionally, tetrapolymerization of the monopyrrole PBG into the hydroxymethylbilane pre-uroporphyrinogen in several discrete steps. The sequence is that of Porphobilinogen deaminase from Pseudomonas putida (strain ATCC 47054 / DSM 6125 / CFBP 8728 / NCIMB 11950 / KT2440).